The chain runs to 106 residues: Insulin-like peptide 03 (106 aa).

An N-terminal signal peptide occupies residues 1-18 (MLFYFGLAVIFLIDSSQT). Positions 19-34 (QTLYKVNEVGGSQVDR) are excised as a propeptide. Disulfide bonds link C37–C93, C49–C106, and C92–C97. A propeptide spans 52-82 (KKRQNIPRKYGRDPNNILEKEEFAKRFLRVR) (c peptide).

It belongs to the insulin family.

It is found in the secreted. Functionally, insulin decreases blood glucose concentration. May have evolved to activate insulin receptors (INSR) in vertebrates. Molecular docking studies reveals unique interaction with the human insulin receptor. In vivo, insulin-like peptide injection reduces blood glucose levels in two models of zebrafish diabetes (streptozotocin- and glucose-induced). Also shorter swimming distance of zebrafish larvae, an effect which is not observed with human insulin. The polypeptide is Insulin-like peptide 03 (Exaiptasia diaphana (Tropical sea anemone)).